The chain runs to 120 residues: NAD(P)H-quinone oxidoreductase subunit 3 (120 aa).

A run of 3 helical transmembrane segments spans residues 6–26 (GYDAFLGFLLIAAAVPVLALV), 64–84 (MFALVFVIFDVETVFLYPWAV), and 89–109 (LGLLAFIEALIFIAILLVALA).

It belongs to the complex I subunit 3 family. As to quaternary structure, NDH-1 can be composed of about 15 different subunits; different subcomplexes with different compositions have been identified which probably have different functions.

The protein resides in the cellular thylakoid membrane. The catalysed reaction is a plastoquinone + NADH + (n+1) H(+)(in) = a plastoquinol + NAD(+) + n H(+)(out). It catalyses the reaction a plastoquinone + NADPH + (n+1) H(+)(in) = a plastoquinol + NADP(+) + n H(+)(out). In terms of biological role, NDH-1 shuttles electrons from an unknown electron donor, via FMN and iron-sulfur (Fe-S) centers, to quinones in the respiratory and/or the photosynthetic chain. The immediate electron acceptor for the enzyme in this species is believed to be plastoquinone. Couples the redox reaction to proton translocation, and thus conserves the redox energy in a proton gradient. Cyanobacterial NDH-1 also plays a role in inorganic carbon-concentration. This chain is NAD(P)H-quinone oxidoreductase subunit 3, found in Synechococcus sp. (strain CC9902).